Reading from the N-terminus, the 299-residue chain is NAD kinase (299 aa).

Aspartate 71 (proton acceptor) is an active-site residue. NAD(+)-binding positions include 71–72, 145–146, arginine 173, aspartate 175, 186–191, alanine 210, and glutamine 248; these read DG, ND, and TAYSLS.

Belongs to the NAD kinase family. Requires a divalent metal cation as cofactor.

It is found in the cytoplasm. The catalysed reaction is NAD(+) + ATP = ADP + NADP(+) + H(+). Its function is as follows. Involved in the regulation of the intracellular balance of NAD and NADP, and is a key enzyme in the biosynthesis of NADP. Catalyzes specifically the phosphorylation on 2'-hydroxyl of the adenosine moiety of NAD to yield NADP. This Bordetella bronchiseptica (strain ATCC BAA-588 / NCTC 13252 / RB50) (Alcaligenes bronchisepticus) protein is NAD kinase.